Consider the following 454-residue polypeptide: Noelin-2 (454 aa).

The signal sequence occupies residues 1-20 (MWPLTVPPPLLLLLCSGLAG). Coiled-coil stretches lie at residues 58 to 85 (RDGR…LELR) and 136 to 193 (LEQY…AQKL). N-linked (GlcNAc...) asparagine glycosylation is found at Asn-74, Asn-155, Asn-275, Asn-310, Asn-399, and Asn-441. The region spanning 194–446 (GCGKLTGVSN…QVLYNVTLFH (253 aa)) is the Olfactomedin-like domain. Residues Cys-195 and Cys-377 are joined by a disulfide bond.

Peripherally associated with AMPAR complex. AMPAR complex consists of an inner core made of 4 pore-forming GluA/GRIA proteins (GRIA1, GRIA2, GRIA3 and GRIA4) and 4 major auxiliary subunits arranged in a twofold symmetry. One of the two pairs of distinct binding sites is occupied either by CNIH2, CNIH3 or CACNG2, CACNG3. The other harbors CACNG2, CACNG3, CACNG4, CACNG8 or GSG1L. This inner core of AMPAR complex is complemented by outer core constituents binding directly to the GluA/GRIA proteins at sites distinct from the interaction sites of the inner core constituents. Outer core constituents include at least PRRT1, PRRT2, CKAMP44/SHISA9, FRRS1L and NRN1. The proteins of the inner and outer core serve as a platform for other, more peripherally associated AMPAR constituents, including OLFM2. Alone or in combination, these auxiliary subunits control the gating and pharmacology of the AMPAR complex and profoundly impact their biogenesis and protein processing. Interacts with GRIA2. Interacts with OLFM1 and OLFM3. Interacts with SRF; the interaction promotes dissociation of SRF from the transcriptional repressor HEY2. Interacts with RUNX2. N-glycosylated. Expressed in aortic smooth muscle (at protein level). In the fetus, expressed in the brain and ocular tissues including lens vesicle and optic cup.

The protein localises to the secreted. Its subcellular location is the synapse. The protein resides in the membrane. It is found in the nucleus. It localises to the cytoplasm. In terms of biological role, involved in transforming growth factor beta (TGF-beta)-induced smooth muscle differentiation. TGF-beta induces expression and translocation of OLFM2 to the nucleus where it binds to SRF, causing its dissociation from the transcriptional repressor HEY2/HERP1 and facilitating binding of SRF to target genes. Plays a role in AMPAR complex organization. Is a regulator of vascular smooth-muscle cell (SMC) phenotypic switching, that acts by promoting RUNX2 and inhibiting MYOCD binding to SRF. SMC phenotypic switching is the process through which vascular SMCs undergo transition between a quiescent contractile phenotype and a proliferative synthetic phenotype in response to pathological stimuli. SMC phenotypic plasticity is essential for vascular development and remodeling. The sequence is that of Noelin-2 (OLFM2) from Homo sapiens (Human).